The sequence spans 318 residues: Thymidylate synthase (318 aa).

DUMP-binding positions include arginine 25 and 180 to 181 (RR). The Nucleophile role is filled by cysteine 200. DUMP-binding positions include 220-223 (RSGD), asparagine 231, and 261-263 (HIY). Aspartate 223 is a binding site for (6R)-5,10-methylene-5,6,7,8-tetrahydrofolate. A (6R)-5,10-methylene-5,6,7,8-tetrahydrofolate-binding site is contributed by alanine 317.

Belongs to the thymidylate synthase family. Bacterial-type ThyA subfamily. Homodimer.

Its subcellular location is the cytoplasm. It catalyses the reaction dUMP + (6R)-5,10-methylene-5,6,7,8-tetrahydrofolate = 7,8-dihydrofolate + dTMP. It functions in the pathway pyrimidine metabolism; dTTP biosynthesis. In terms of biological role, catalyzes the reductive methylation of 2'-deoxyuridine-5'-monophosphate (dUMP) to 2'-deoxythymidine-5'-monophosphate (dTMP) while utilizing 5,10-methylenetetrahydrofolate (mTHF) as the methyl donor and reductant in the reaction, yielding dihydrofolate (DHF) as a by-product. This enzymatic reaction provides an intracellular de novo source of dTMP, an essential precursor for DNA biosynthesis. The sequence is that of Thymidylate synthase from Bacillus cereus (strain ATCC 14579 / DSM 31 / CCUG 7414 / JCM 2152 / NBRC 15305 / NCIMB 9373 / NCTC 2599 / NRRL B-3711).